We begin with the raw amino-acid sequence, 2388 residues long: Highly reducing polyketide synthase Preu1 (2388 aa).

The Ketosynthase family 3 (KS3) domain occupies 7–432 (NDDIAIVGLA…GTNAHVILDD (426 aa)). Residues cysteine 180, histidine 315, and histidine 355 each act as for beta-ketoacyl synthase activity in the active site. Residues 549-875 (GFVFTGQGAQ…SSVLMRGEDG (327 aa)) are malonyl-CoA:ACP transacylase (MAT) domain. Serine 641 acts as the For malonyltransferase activity in catalysis. The segment at 940–1074 (HDLLGAPTQD…GLGKIHYRPE (135 aa)) is N-terminal hotdog fold. Residues 940–1256 (HDLLGAPTQD…CRELPNGNSQ (317 aa)) enclose the PKS/mFAS DH domain. Residues 941-1251 (DLLGAPTQDS…VEGLRCRELP (311 aa)) form a dehydratase (DH) domain region. Histidine 972 acts as the Proton acceptor; for dehydratase activity in catalysis. Residues 1102 to 1256 (TASISPVDFY…CRELPNGNSQ (155 aa)) form a C-terminal hotdog fold region. Aspartate 1167 functions as the Proton donor; for dehydratase activity in the catalytic mechanism. The enoyl reductase (ER) domain stretch occupies residues 1676 to 1983 (KLPSDARFTS…VPTGLGKAVL (308 aa)). Residues 2007–2191 (ATYVLAGGLG…AATSVDLGLM (185 aa)) are ketoreductase (KR) domain. The Carrier domain occupies 2303–2380 (QANGIVLEAL…ALAEKISKAS (78 aa)). Serine 2340 bears the O-(pantetheine 4'-phosphoryl)serine mark.

The cofactor is pantetheine 4'-phosphate.

In terms of biological role, highly reducing polyketide synthase; part of a gene cluster that mediates the biosynthesis of a yet unidentified natural product. The polypeptide is Highly reducing polyketide synthase Preu1 (Preussia isomera (Coprophilous fungus)).